Reading from the N-terminus, the 218-residue chain is N-alpha-acetyltransferase 11 (218 aa).

The segment at M1–A58 is interaction with NAA15. The 152-residue stretch at M1–S152 folds into the N-acetyltransferase domain. The segment at E175–S218 is disordered. Residues S196–T205 are compositionally biased toward low complexity. The span at D209–S218 shows a compositional bias: acidic residues.

Belongs to the acetyltransferase family. ARD1 subfamily. As to quaternary structure, component of the N-terminal acetyltransferase A (NatA) complex composed of NAA11 and NAA15. Interacts with HIF1A.

It localises to the cytoplasm. The protein resides in the nucleus. It catalyses the reaction N-terminal glycyl-[protein] + acetyl-CoA = N-terminal N(alpha)-acetylglycyl-[protein] + CoA + H(+). The catalysed reaction is N-terminal L-alanyl-[protein] + acetyl-CoA = N-terminal N(alpha)-acetyl-L-alanyl-[protein] + CoA + H(+). It carries out the reaction N-terminal L-seryl-[protein] + acetyl-CoA = N-terminal N(alpha)-acetyl-L-seryl-[protein] + CoA + H(+). The enzyme catalyses N-terminal L-valyl-[protein] + acetyl-CoA = N-terminal N(alpha)-acetyl-L-valyl-[protein] + CoA + H(+). It catalyses the reaction N-terminal L-cysteinyl-[protein] + acetyl-CoA = N-terminal N(alpha)-acetyl-L-cysteinyl-[protein] + CoA + H(+). The catalysed reaction is N-terminal L-threonyl-[protein] + acetyl-CoA = N-terminal N(alpha)-acetyl-L-threonyl-[protein] + CoA + H(+). Functionally, displays alpha (N-terminal) acetyltransferase activity. Proposed alternative catalytic subunit of the N-terminal acetyltransferase A (NatA) complex. This chain is N-alpha-acetyltransferase 11 (Naa11), found in Mus musculus (Mouse).